The following is a 273-amino-acid chain: N-alpha-acetyltransferase 30 (273 aa).

2 disordered regions span residues 1 to 39 (MADA…HQLN) and 62 to 85 (QKTR…PNGL). Positions 125-273 (RYVRYESELQ…DALRLKLWLR (149 aa)) constitute an N-acetyltransferase domain.

The protein belongs to the acetyltransferase family. MAK3 subfamily. Component of the N-terminal acetyltransferase C (NatC) complex.

It is found in the cytoplasm. Its subcellular location is the nucleus. The enzyme catalyses N-terminal L-methionyl-L-leucyl-[protein] + acetyl-CoA = N-terminal N(alpha)-acetyl-L-methionyl-L-leucyl-[protein] + CoA + H(+). The catalysed reaction is N-terminal L-methionyl-L-isoleucyl-[protein] + acetyl-CoA = N-terminal N(alpha)-acetyl-L-methionyl-L-isoleucyl-[protein] + CoA + H(+). It carries out the reaction N-terminal L-methionyl-L-phenylalanyl-[protein] + acetyl-CoA = N-terminal N(alpha)-acetyl-L-methionyl-L-phenylalanyl-[protein] + CoA + H(+). It catalyses the reaction N-terminal L-methionyl-L-tryptophyl-[protein] + acetyl-CoA = N-terminal N(alpha)-acetyl-L-methionyl-L-tryptophyl-[protein] + CoA + H(+). The enzyme catalyses N-terminal L-methionyl-L-tyrosyl-[protein] + acetyl-CoA = N-terminal N(alpha)-acetyl-L-methionyl-L-tyrosyl-[protein] + CoA + H(+). Catalytic subunit of the N-terminal acetyltransferase C (NatC) complex. Catalyzes acetylation of the N-terminal methionine residues of peptides beginning with Met-Leu-Ala and Met-Leu-Gly. N-terminal acetylation protects proteins from ubiquitination and degradation by the N-end rule pathway. The sequence is that of N-alpha-acetyltransferase 30 (naa30) from Xenopus laevis (African clawed frog).